Reading from the N-terminus, the 493-residue chain is Alpha-amylase-related protein (493 aa).

The N-terminal stretch at 1 to 19 (MFKFALTLTLCLAGSLSLA) is a signal peptide. Pyrrolidone carboxylic acid is present on glutamine 20. Cysteine 47 and cysteine 103 are disulfide-bonded. The Ca(2+) site is built by asparagine 117, glutamine 168, and aspartate 177. Cysteine 156 and cysteine 170 are oxidised to a cystine. Arginine 205 serves as a coordination point for chloride. The active-site Nucleophile is aspartate 207. Histidine 211 is a binding site for Ca(2+). Glutamate 244 (proton donor) is an active-site residue. The chloride site is built by asparagine 307 and arginine 342. 3 disulfides stabilise this stretch: cysteine 375–cysteine 381, cysteine 417–cysteine 440, and cysteine 447–cysteine 459.

It belongs to the glycosyl hydrolase 13 family. Monomer. Requires Ca(2+) as cofactor. It depends on chloride as a cofactor.

It localises to the secreted. It carries out the reaction Endohydrolysis of (1-&gt;4)-alpha-D-glucosidic linkages in polysaccharides containing three or more (1-&gt;4)-alpha-linked D-glucose units.. This Drosophila sechellia (Fruit fly) protein is Alpha-amylase-related protein (Amyrel).